A 365-amino-acid polypeptide reads, in one-letter code: Carbohydrate sulfotransferase 10 (365 aa).

At 1–6 (MRRHWL) the chain is on the cytoplasmic side. A helical; Signal-anchor for type II membrane protein membrane pass occupies residues 7–27 (LVGACGWVLLILMFVSKFINF). Topologically, residues 28–356 (SFRIPGDYAG…RYQGDFSLFD (329 aa)) are lumenal. 2 N-linked (GlcNAc...) asparagine glycosylation sites follow: asparagine 99 and asparagine 104. Residues 132–138 (PKVGNTQ) and 194–202 (RDPFERLIS) contribute to the 3'-phosphoadenylyl sulfate site. A glycan (N-linked (GlcNAc...) asparagine) is linked at asparagine 325.

The protein belongs to the sulfotransferase 2 family.

The protein resides in the golgi apparatus membrane. Catalyzes the transfer of sulfate to position 3 of terminal glucuronic acid of both protein- and lipid-linked oligosaccharides. Participates in biosynthesis of HNK-1 carbohydrate structure, a sulfated glucuronyl-lactosaminyl residue carried by many neural recognition molecules. This is Carbohydrate sulfotransferase 10 (chst10) from Danio rerio (Zebrafish).